The primary structure comprises 104 residues: UPF0213 protein YsiG (104 aa).

Residues 2–79 (NQYFTYILQC…KLVRKQKLSL (78 aa)) form the GIY-YIG domain.

It belongs to the UPF0213 family.

This is UPF0213 protein YsiG (ysiG) from Lactococcus lactis subsp. lactis (strain IL1403) (Streptococcus lactis).